Reading from the N-terminus, the 90-residue chain is Small ribosomal subunit protein uS15 (90 aa).

It belongs to the universal ribosomal protein uS15 family. In terms of assembly, part of the 30S ribosomal subunit. Forms a bridge to the 50S subunit in the 70S ribosome, contacting the 23S rRNA.

Functionally, one of the primary rRNA binding proteins, it binds directly to 16S rRNA where it helps nucleate assembly of the platform of the 30S subunit by binding and bridging several RNA helices of the 16S rRNA. Its function is as follows. Forms an intersubunit bridge (bridge B4) with the 23S rRNA of the 50S subunit in the ribosome. The chain is Small ribosomal subunit protein uS15 from Wolbachia pipientis subsp. Culex pipiens (strain wPip).